An 86-amino-acid chain; its full sequence is Small ribosomal subunit protein uS17 (86 aa).

The protein belongs to the universal ribosomal protein uS17 family. As to quaternary structure, part of the 30S ribosomal subunit.

One of the primary rRNA binding proteins, it binds specifically to the 5'-end of 16S ribosomal RNA. The sequence is that of Small ribosomal subunit protein uS17 from Streptococcus thermophilus (strain CNRZ 1066).